The sequence spans 543 residues: NXPE family member 4 (543 aa).

Positions Met-1 to Phe-26 are cleaved as a signal peptide. Asn-91, Asn-159, and Asn-223 each carry an N-linked (GlcNAc...) asparagine glycan.

Belongs to the NXPE family.

It localises to the secreted. The sequence is that of NXPE family member 4 (Nxpe4) from Mus musculus (Mouse).